The primary structure comprises 289 residues: Protoheme IX farnesyltransferase (289 aa).

9 consecutive transmembrane segments (helical) span residues 18 to 38, 40 to 60, 87 to 107, 111 to 131, 139 to 159, 168 to 188, 212 to 232, 234 to 254, and 269 to 289; these read VTSL…EQSP, GFLI…SFIF, VVQA…VLAV, LLTA…YTIF, NIVI…AAIG, SLFM…AIFL, SIFF…FLES, MGFL…ILSY, and FFFS…DHLI.

This sequence belongs to the UbiA prenyltransferase family. Protoheme IX farnesyltransferase subfamily.

It is found in the cell inner membrane. The enzyme catalyses heme b + (2E,6E)-farnesyl diphosphate + H2O = Fe(II)-heme o + diphosphate. Its pathway is porphyrin-containing compound metabolism; heme O biosynthesis; heme O from protoheme: step 1/1. Functionally, converts heme B (protoheme IX) to heme O by substitution of the vinyl group on carbon 2 of heme B porphyrin ring with a hydroxyethyl farnesyl side group. The chain is Protoheme IX farnesyltransferase from Leptospira interrogans serogroup Icterohaemorrhagiae serovar copenhageni (strain Fiocruz L1-130).